Reading from the N-terminus, the 120-residue chain is MIF-like protein mif-2 (120 aa).

The protein belongs to the MIF family.

The sequence is that of MIF-like protein mif-2 (mif-2) from Caenorhabditis elegans.